Consider the following 141-residue polypeptide: Hemoglobin subunit alpha-D (141 aa).

Positions 1-141 (MLNAEDKKLI…VSAVLAEKYR (141 aa)) constitute a Globin domain. Positions 58 and 87 each coordinate heme b.

The protein belongs to the globin family. Heterotetramer of two alpha-D chains and two beta chains. As to expression, red blood cells.

Functionally, involved in oxygen transport from the lung to the various peripheral tissues. The polypeptide is Hemoglobin subunit alpha-D (HBAD) (Phasianus colchicus colchicus (Black-necked pheasant)).